An 805-amino-acid chain; its full sequence is Phenylalanine--tRNA ligase beta subunit (805 aa).

The tRNA-binding domain maps to 39–155 (VKVLGAFRIC…EDAPMGMRFI (117 aa)). Residues 408-479 (DTSRAYRFDP…RVASLTKLQG (72 aa)) form the B5 domain. Asp457, Asp463, Glu466, and Glu467 together coordinate Mg(2+). Residues 707–804 (SDLQAVERDF…VAKATGATLR (98 aa)) form the FDX-ACB domain.

The protein belongs to the phenylalanyl-tRNA synthetase beta subunit family. Type 1 subfamily. As to quaternary structure, tetramer of two alpha and two beta subunits. Requires Mg(2+) as cofactor.

It is found in the cytoplasm. The enzyme catalyses tRNA(Phe) + L-phenylalanine + ATP = L-phenylalanyl-tRNA(Phe) + AMP + diphosphate + H(+). This chain is Phenylalanine--tRNA ligase beta subunit, found in Cereibacter sphaeroides (strain ATCC 17023 / DSM 158 / JCM 6121 / CCUG 31486 / LMG 2827 / NBRC 12203 / NCIMB 8253 / ATH 2.4.1.) (Rhodobacter sphaeroides).